A 287-amino-acid chain; its full sequence is Ethylene-responsive transcription factor ERF116 (287 aa).

Residues 80-140 (YPVGVRPRPS…ASSGSAVSSS (61 aa)) constitute a DNA-binding region (AP2/ERF).

Belongs to the AP2/ERF transcription factor family. ERF subfamily.

The protein resides in the nucleus. Its function is as follows. Probably acts as a transcriptional activator. Binds to the GCC-box pathogenesis-related promoter element. May be involved in the regulation of gene expression by stress factors and by components of stress signal transduction pathways. The polypeptide is Ethylene-responsive transcription factor ERF116 (ERF116) (Arabidopsis thaliana (Mouse-ear cress)).